Reading from the N-terminus, the 55-residue chain is ATP synthase F(0) complex subunit 8 (55 aa).

The chain crosses the membrane as a helical span at residues 10-30; sequence FPIMMLSWLIFSLIIQPKLLL. The interval 35 to 55 is disordered; it reads NPPSNKTTTTTRSNPWTWPWT. Residues 37-55 show a composition bias toward low complexity; the sequence is PSNKTTTTTRSNPWTWPWT.

Belongs to the ATPase protein 8 family. As to quaternary structure, component of the ATP synthase complex composed at least of ATP5F1A/subunit alpha, ATP5F1B/subunit beta, ATP5MC1/subunit c (homooctomer), MT-ATP6/subunit a, MT-ATP8/subunit 8, ATP5ME/subunit e, ATP5MF/subunit f, ATP5MG/subunit g, ATP5MK/subunit k, ATP5MJ/subunit j, ATP5F1C/subunit gamma, ATP5F1D/subunit delta, ATP5F1E/subunit epsilon, ATP5PF/subunit F6, ATP5PB/subunit b, ATP5PD/subunit d, ATP5PO/subunit OSCP. ATP synthase complex consists of a soluble F(1) head domain (subunits alpha(3) and beta(3)) - the catalytic core - and a membrane F(0) domain - the membrane proton channel (subunits c, a, 8, e, f, g, k and j). These two domains are linked by a central stalk (subunits gamma, delta, and epsilon) rotating inside the F1 region and a stationary peripheral stalk (subunits F6, b, d, and OSCP).

It is found in the mitochondrion membrane. In terms of biological role, subunit 8, of the mitochondrial membrane ATP synthase complex (F(1)F(0) ATP synthase or Complex V) that produces ATP from ADP in the presence of a proton gradient across the membrane which is generated by electron transport complexes of the respiratory chain. ATP synthase complex consist of a soluble F(1) head domain - the catalytic core - and a membrane F(1) domain - the membrane proton channel. These two domains are linked by a central stalk rotating inside the F(1) region and a stationary peripheral stalk. During catalysis, ATP synthesis in the catalytic domain of F(1) is coupled via a rotary mechanism of the central stalk subunits to proton translocation. In vivo, can only synthesize ATP although its ATP hydrolase activity can be activated artificially in vitro. Part of the complex F(0) domain. The sequence is that of ATP synthase F(0) complex subunit 8 from Opisthocomus hoazin (Hoatzin).